A 377-amino-acid polypeptide reads, in one-letter code: Anhydro-N-acetylmuramic acid kinase (377 aa).

18 to 25 (GTSADGID) is an ATP binding site.

This sequence belongs to the anhydro-N-acetylmuramic acid kinase family.

It carries out the reaction 1,6-anhydro-N-acetyl-beta-muramate + ATP + H2O = N-acetyl-D-muramate 6-phosphate + ADP + H(+). The protein operates within amino-sugar metabolism; 1,6-anhydro-N-acetylmuramate degradation. Its pathway is cell wall biogenesis; peptidoglycan recycling. In terms of biological role, catalyzes the specific phosphorylation of 1,6-anhydro-N-acetylmuramic acid (anhMurNAc) with the simultaneous cleavage of the 1,6-anhydro ring, generating MurNAc-6-P. Is required for the utilization of anhMurNAc either imported from the medium or derived from its own cell wall murein, and thus plays a role in cell wall recycling. The sequence is that of Anhydro-N-acetylmuramic acid kinase from Xanthomonas campestris pv. campestris (strain 8004).